The sequence spans 128 residues: MAEITREQVVDYLSNLPVIQIAELIKDLENKWGVKAAPAAVAVAAGPAAAAPAEKAPEQTEFDVVLANAGSNKIGVIKAIREITGLGLKEAKDLVEAAPKTVKEQVSKADAEEMKKKLVEAGATVELK.

It belongs to the bacterial ribosomal protein bL12 family. In terms of assembly, homodimer. Part of the ribosomal stalk of the 50S ribosomal subunit. Forms a multimeric L10(L12)X complex, where L10 forms an elongated spine to which 2 to 4 L12 dimers bind in a sequential fashion. Binds GTP-bound translation factors.

Forms part of the ribosomal stalk which helps the ribosome interact with GTP-bound translation factors. Is thus essential for accurate translation. In Sorangium cellulosum (strain So ce56) (Polyangium cellulosum (strain So ce56)), this protein is Large ribosomal subunit protein bL12.